The chain runs to 315 residues: 1-aminocyclopropane-1-carboxylate oxidase 1 (315 aa).

The 101-residue stretch at proline 153 to proline 253 folds into the Fe2OG dioxygenase domain. Residues histidine 177, aspartate 179, and histidine 234 each coordinate Fe cation.

Belongs to the iron/ascorbate-dependent oxidoreductase family. Fe cation is required as a cofactor. Predominantly expressed in the petals and the stigma and style.

The enzyme catalyses 1-aminocyclopropane-1-carboxylate + L-ascorbate + O2 = ethene + L-dehydroascorbate + hydrogen cyanide + CO2 + 2 H2O. It participates in alkene biosynthesis; ethylene biosynthesis via S-adenosyl-L-methionine; ethylene from S-adenosyl-L-methionine: step 2/2. The sequence is that of 1-aminocyclopropane-1-carboxylate oxidase 1 (ACO1) from Solanum lycopersicum (Tomato).